The chain runs to 381 residues: MSLNMFWFLPTHGDGHYLGTEEGSRPVDHGYLQQIAQAADRLGYTGVLIPTGRSCEDAWLVAASMIPVTQRLKFLVALRPSVTSPTVAARQAATLDRLSNGRALFNLVTGSDPQELAGDGVFLDHSERYEASAEFTQVWRRLLLGETVNFNGKHIHVRGAKLLFPPIQQPYPPLYFGGSSDVAQELAAEQVDLYLTWGEPPELVKEKIEQVRAKAAAHGHKIRFGIRLHVIVRETNDEAWQAAERLISHLDDETIAKAQAAFARTDSVGQQRMAALHNGKRDNLEISPNLWAGVGLVRGGAGTALVGDGPTVAARINEYAALGIDSFVLSGYPHLEEAYRVGELLFPHLDVAIPEIPQPQPLNPQGEAVANDFIPRKVAQS.

It belongs to the SsuD family. Homotetramer.

The enzyme catalyses an alkanesulfonate + FMNH2 + O2 = an aldehyde + FMN + sulfite + H2O + 2 H(+). Catalyzes the desulfonation of aliphatic sulfonates. In Escherichia coli O8 (strain IAI1), this protein is Alkanesulfonate monooxygenase.